A 448-amino-acid chain; its full sequence is Protein Z-dependent protease inhibitor (448 aa).

A signal peptide spans 1–21 (MRVASSLFLPVLLTEVWLVTS). Residues 33 to 70 (VHLESQDYENQTWEEYTRTDPREEEEEEEEKEEGKDEE) are disordered. Positions 54 to 63 (REEEEEEEEK) are enriched in acidic residues. Residue N81 is glycosylated (N-linked (GlcNAc...) asparagine). The heparin-binding stretch occupies residues 140–157 (AGPLILPALFKKVKETFS). Residues N184, N278, and N299 are each glycosylated (N-linked (GlcNAc...) asparagine).

It belongs to the serpin family. Post-translationally, phosphorylated by FAM20C in the extracellular medium. As to expression, detectable in liver, but not in heart, brain, spleen, lung, kidney, skeletal muscle or testes.

The protein resides in the secreted. Inhibits activity of the coagulation protease factor Xa in the presence of PROZ, calcium and phospholipids. Also inhibits factor XIa in the absence of cofactors. The sequence is that of Protein Z-dependent protease inhibitor (Serpina10) from Mus musculus (Mouse).